A 440-amino-acid chain; its full sequence is Tetratricopeptide repeat protein 5 (440 aa).

TPR repeat units lie at residues 7–61 (EEVK…EEVV), 68–98 (AQVL…AVKL), 103–130 (VEAW…SGAL), 136–174 (KVSL…AVQM), and 179–216 (GRSW…AEKV). The Nuclear export signal motif lies at 13–24 (LQKLQELVDQLY). A Phosphoserine; by ATM modification is found at serine 203. A Phosphoserine; by CHEK2 modification is found at serine 221. The stretch at 224-253 (PDLHLNRATLHKYEESYGEALEGFSRAAAL) is one TPR 6 repeat. The interval 285-287 (KTK) is mediates interaction with 28S rRNA of ribosome-coding tubulin.

In terms of assembly, interacts with JMY and p300/EP300; the interaction occurs in the nucleus and augments the association between JMY and p300/EP300 in response to DNA damage. Forms a complex with HSF1 and p300/EP300; these interactions augment chromatin-bound HSF1 and p300/EP300 histone acetyltransferase activity, resulting in enhanced heat-shock-responsive transcription. Interacts with PRMT5; the interaction is DNA damage-dependent and promotes PRMT5 interaction with p53/TP53 and subsequent methylation. Interacts with JMY; the interaction occurs in the cytoplasm and results in the inhibition of JYM's nucleation activity. Interacts with ribosome-coding tubulin (via 60S subunit 28S rRNA and protein uL24/RPL26) and the N-terminal of nascent tubulin polypeptide (via alpha-tubulin MREC motif and beta-tubulin MREI motif); these interactions result in tubulin mRNA-targeted degradation. Interacts with ATP5F1B; the interaction occurs in the mitochondria and results in ATP production decrease. Interacts with p53/TP53; the interaction occurs in the mitochondria and results in increased apoptosis. Phosphorylation by ATM kinase induces nuclear accumulation while interfering with nuclear export, and phosphorylation by CHEK2 kinase enhances nuclear stability.

It localises to the nucleus. The protein resides in the cytoplasm. It is found in the cytoplasmic vesicle. The protein localises to the mitochondrion matrix. In terms of biological role, cofactor involved in the regulation of various cellular mechanisms such as actin regulation, autophagy, chromatin regulation and DNA repair. In non-stress conditions, interacts with cofactor JMY in the cytoplasm which prevents JMY's actin nucleation activity and ability to activate the Arp2/3 complex. Acts as a negative regulator of nutrient stress-induced autophagy by preventing JMY's interaction with MAP1LC3B, thereby preventing autophagosome formation. Involves in tubulin autoregulation by promoting its degradation in response to excess soluble tubulin. To do so, associates with the active ribosome near the ribosome exit tunnel and with nascent tubulin polypeptides early during their translation, triggering tubulin mRNA-targeted degradation. Following DNA damage, phosphorylated by DNA damage responsive protein kinases ATM and CHEK2, leading to its nuclear accumulation and stability. Nuclear TTC5/STRAP promotes the assembly of a stress-responsive p53/TP53 coactivator complex, which includes the coactivators JMY and p300, thereby increasing p53/TP53-dependent transcription and apoptosis. Also recruits arginine methyltransferase PRMT5 to p53/TP53 when DNA is damaged, allowing PRMT5 to methylate p53/TP53. In DNA stress conditions, also prevents p53/TP53 degradation by E3 ubiquitin ligase MDM2. Upon heat-shock stress, forms a chromatin-associated complex with heat-shock factor 1 HSF1 and p300/EP300 to stimulate heat-shock-responsive transcription, thereby increasing cell survival. Mitochondrial TTC5/STRAP interacts with ATP synthase subunit beta ATP5F1B which decreased ATP synthase activity and lowers mitochondrial ATP production, thereby regulating cellular respiration and mitochondrial-dependent apoptosis. Mitochondrial TTC5/STRAP also regulates p53/TP53-mediated apoptosis. The chain is Tetratricopeptide repeat protein 5 from Homo sapiens (Human).